Consider the following 188-residue polypeptide: Adenylate kinase (188 aa).

Position 11–16 (11–16 (GAGKGT)) interacts with ATP. The interval 31 to 60 (STGDIFRANIKDQTELGREAQRYTDAGNLV) is NMP. AMP is bound by residues Thr-32, Arg-37, 58-60 (NLV), 86-89 (GYPR), and Gln-93. The tract at residues 127–137 (GRAQEQGRTDD) is LID. Residue Arg-128 participates in ATP binding. Residues Arg-134 and Arg-145 each coordinate AMP. Gly-173 provides a ligand contact to ATP.

This sequence belongs to the adenylate kinase family. As to quaternary structure, monomer.

Its subcellular location is the cytoplasm. The enzyme catalyses AMP + ATP = 2 ADP. The protein operates within purine metabolism; AMP biosynthesis via salvage pathway; AMP from ADP: step 1/1. Its function is as follows. Catalyzes the reversible transfer of the terminal phosphate group between ATP and AMP. Plays an important role in cellular energy homeostasis and in adenine nucleotide metabolism. This is Adenylate kinase from Kocuria rhizophila (strain ATCC 9341 / DSM 348 / NBRC 103217 / DC2201).